The sequence spans 78 residues: Large ribosomal subunit protein bL28 (78 aa).

The disordered stretch occupies residues 1–24; the sequence is MSRVCQVTGKRPAVGNNRSHANNA.

Belongs to the bacterial ribosomal protein bL28 family.

In Aeromonas salmonicida (strain A449), this protein is Large ribosomal subunit protein bL28.